We begin with the raw amino-acid sequence, 389 residues long: Formate-dependent phosphoribosylglycinamide formyltransferase (389 aa).

Residues 12 to 13 (EL) and glutamate 72 contribute to the N(1)-(5-phospho-beta-D-ribosyl)glycinamide site. Residues arginine 104, lysine 145, 150-155 (SSGKGQ), 185-188 (EAFV), and glutamate 193 each bind ATP. One can recognise an ATP-grasp domain in the interval 109–300 (DLASKELGLR…EFELHARAVL (192 aa)). Mg(2+) contacts are provided by glutamate 258 and glutamate 270. N(1)-(5-phospho-beta-D-ribosyl)glycinamide-binding positions include aspartate 277, lysine 348, and 355-356 (RR).

It belongs to the PurK/PurT family. In terms of assembly, homodimer.

It carries out the reaction N(1)-(5-phospho-beta-D-ribosyl)glycinamide + formate + ATP = N(2)-formyl-N(1)-(5-phospho-beta-D-ribosyl)glycinamide + ADP + phosphate + H(+). It functions in the pathway purine metabolism; IMP biosynthesis via de novo pathway; N(2)-formyl-N(1)-(5-phospho-D-ribosyl)glycinamide from N(1)-(5-phospho-D-ribosyl)glycinamide (formate route): step 1/1. Its function is as follows. Involved in the de novo purine biosynthesis. Catalyzes the transfer of formate to 5-phospho-ribosyl-glycinamide (GAR), producing 5-phospho-ribosyl-N-formylglycinamide (FGAR). Formate is provided by PurU via hydrolysis of 10-formyl-tetrahydrofolate. In Chlorobium phaeobacteroides (strain DSM 266 / SMG 266 / 2430), this protein is Formate-dependent phosphoribosylglycinamide formyltransferase.